Here is a 333-residue protein sequence, read N- to C-terminus: Mevalonate kinase (333 aa).

109–119 (PVGAGLGSSAA) contacts ATP. The active-site Proton acceptor is the D160.

The protein belongs to the GHMP kinase family. Mevalonate kinase subfamily. As to quaternary structure, homodimer. It depends on Mg(2+) as a cofactor.

The protein localises to the cytoplasm. It catalyses the reaction (R)-mevalonate + ATP = (R)-5-phosphomevalonate + ADP + H(+). The protein operates within isoprenoid biosynthesis; isopentenyl diphosphate biosynthesis via mevalonate pathway; isopentenyl diphosphate from (R)-mevalonate: step 1/3. Its function is as follows. Catalyzes the phosphorylation of (R)-mevalonate (MVA) to (R)-mevalonate 5-phosphate (MVAP). Functions in the mevalonate (MVA) pathway leading to isopentenyl diphosphate (IPP), a key precursor for the biosynthesis of isoprenoid compounds such as archaeal membrane lipids. The protein is Mevalonate kinase of Thermococcus sibiricus (strain DSM 12597 / MM 739).